We begin with the raw amino-acid sequence, 85 residues long: Toxin AahP1005 (85 aa).

The signal sequence occupies residues 1–19 (MNYLVMISLALLFMTGVES). The region spanning 21 to 83 (KDGYIVDDKN…VSTKKKGGCN (63 aa)) is the LCN-type CS-alpha/beta domain. Intrachain disulfides connect Cys31–Cys82, Cys35–Cys55, Cys41–Cys65, and Cys45–Cys67. Asparagine amide is present on Asn83.

It belongs to the long (4 C-C) scorpion toxin superfamily. Sodium channel inhibitor family. Alpha subfamily. As to expression, expressed by the venom gland.

It is found in the secreted. Its function is as follows. Alpha toxins bind voltage-independently at site-3 of sodium channels (Nav) and inhibit the inactivation of the activated channels, thereby blocking neuronal transmission. In Androctonus australis (Sahara scorpion), this protein is Toxin AahP1005.